The chain runs to 188 residues: dCTP deaminase (188 aa).

DCTP contacts are provided by residues 111 to 116, 135 to 137, Gln156, Tyr170, and Gln180; these read KSTYAR and TLE. Glu137 acts as the Proton donor/acceptor in catalysis.

It belongs to the dCTP deaminase family. As to quaternary structure, homotrimer.

The catalysed reaction is dCTP + H2O + H(+) = dUTP + NH4(+). It participates in pyrimidine metabolism; dUMP biosynthesis; dUMP from dCTP (dUTP route): step 1/2. In terms of biological role, catalyzes the deamination of dCTP to dUTP. The protein is dCTP deaminase of Herminiimonas arsenicoxydans.